Here is a 433-residue protein sequence, read N- to C-terminus: GPI mannosyltransferase 2 (433 aa).

M1 is a topological domain (cytoplasmic). A helical membrane pass occupies residues 2 to 22 (IVGLTLYFVLFRSIQYLLVFL). At 23 to 109 (TPIRQFDTST…NNDSIYHALR (87 aa)) the chain is on the lumenal side. N-linked (GlcNAc...) asparagine glycans are attached at residues N69 and N101. The helical transmembrane segment at 110–130 (VGVAIENVLFYLSGIVLYFLT) threads the bilayer. Residues 131 to 161 (KKIFSQNIRQSQFARTIAKKTSLLFFLTSAA) lie on the Cytoplasmic side of the membrane. Residues 162 to 182 (GFLTSIYSEPLSFFFAFVGIW) traverse the membrane as a helical segment. The Lumenal segment spans residues 183–215 (SRECSISVPVLGQFDISWRYWFPYSFISMACFT). The chain crosses the membrane as a helical span at residues 216–236 (LASLNRSNCVLLGIYFIFDLI). Residues 237 to 243 (ELTKNRK) are Cytoplasmic-facing. Residues 244 to 264 (FVKAICFPLLSGSLMFSALLY) form a helical membrane-spanning segment. Residues 265 to 318 (QQYYLPYKTFCPQRGEWCKSQLFSSIFITKTSLYSYIQSHYWGVGLLKYWTPNN) lie on the Lumenal side of the membrane. A helical membrane pass occupies residues 319–339 (IPNFLFAVPNIIILIYSSIYF). Residues 340–350 (SKIYPSYNLKA) lie on the Cytoplasmic side of the membrane. The chain crosses the membrane as a helical span at residues 351–371 (LVWITRALVVIVCFFAHVQIL). Residues 372-409 (NRIASFLPLHLWYLADRLVKTSDPKKMENPKGDDKIVK) lie on the Lumenal side of the membrane. The chain crosses the membrane as a helical span at residues 410 to 430 (FYIYWLAFWIPLQTILFAAFL). Residues 431–433 (PPA) are Cytoplasmic-facing.

The protein belongs to the PIGV family. Part of the GPI mannosyltransferase 2 complex composed of GPI18 and PGA1.

It is found in the endoplasmic reticulum membrane. Its pathway is glycolipid biosynthesis; glycosylphosphatidylinositol-anchor biosynthesis. Mannosyltransferase involved in glycosylphosphatidylinositol-anchor biosynthesis. Responsible for the transfer of the second mannose to the glycosylphosphatidylinositol during GPI precursor assembly. The polypeptide is GPI mannosyltransferase 2 (GPI18) (Saccharomyces cerevisiae (strain ATCC 204508 / S288c) (Baker's yeast)).